Here is a 447-residue protein sequence, read N- to C-terminus: Phosphoglucosamine mutase (447 aa).

Ser-101 (phosphoserine intermediate) is an active-site residue. Positions 101, 242, 244, and 246 each coordinate Mg(2+). Phosphoserine is present on Ser-101.

This sequence belongs to the phosphohexose mutase family. It depends on Mg(2+) as a cofactor. Activated by phosphorylation.

The catalysed reaction is alpha-D-glucosamine 1-phosphate = D-glucosamine 6-phosphate. Its function is as follows. Catalyzes the conversion of glucosamine-6-phosphate to glucosamine-1-phosphate. The sequence is that of Phosphoglucosamine mutase from Bradyrhizobium diazoefficiens (strain JCM 10833 / BCRC 13528 / IAM 13628 / NBRC 14792 / USDA 110).